Reading from the N-terminus, the 409-residue chain is LL-diaminopimelate aminotransferase (409 aa).

The substrate site is built by Tyr-15 and Gly-42. Pyridoxal 5'-phosphate contacts are provided by residues Tyr-72, 108 to 109, Tyr-132, Asn-186, Tyr-217, and 245 to 247; these read AK and SFS. Substrate is bound by residues Lys-109, Tyr-132, and Asn-186. At Lys-248 the chain carries N6-(pyridoxal phosphate)lysine. The pyridoxal 5'-phosphate site is built by Arg-256 and Asn-291. Substrate-binding residues include Asn-291 and Arg-387.

This sequence belongs to the class-I pyridoxal-phosphate-dependent aminotransferase family. LL-diaminopimelate aminotransferase subfamily. In terms of assembly, homodimer. Pyridoxal 5'-phosphate is required as a cofactor.

The enzyme catalyses (2S,6S)-2,6-diaminopimelate + 2-oxoglutarate = (S)-2,3,4,5-tetrahydrodipicolinate + L-glutamate + H2O + H(+). It functions in the pathway amino-acid biosynthesis; L-lysine biosynthesis via DAP pathway; LL-2,6-diaminopimelate from (S)-tetrahydrodipicolinate (aminotransferase route): step 1/1. In terms of biological role, involved in the synthesis of meso-diaminopimelate (m-DAP or DL-DAP), required for both lysine and peptidoglycan biosynthesis. Catalyzes the direct conversion of tetrahydrodipicolinate to LL-diaminopimelate. In Parabacteroides distasonis (strain ATCC 8503 / DSM 20701 / CIP 104284 / JCM 5825 / NCTC 11152), this protein is LL-diaminopimelate aminotransferase.